The sequence spans 351 residues: Leukotriene B4 receptor 1 (351 aa).

Over 1–21 (MAANTTSTAATSSPGGMSLSL) the chain is Extracellular. N-linked (GlcNAc...) asparagine glycosylation is present at Asn-4. A helical membrane pass occupies residues 22-44 (LPIVLLSVALVVGLPGNSFVVWS). The Cytoplasmic segment spans residues 45–56 (ILKRMQKRSVTA). Residues 57–77 (LLVLNLALADLAVLLTAPFFL) traverse the membrane as a helical segment. Residues 78–93 (HFLARGTWSFEVTGCR) are Extracellular-facing. Residues 94–115 (LCHYVCGVSMYASVLLITIMSL) form a helical membrane-spanning segment. Topologically, residues 116 to 140 (DRSLAVARPFVSQKVRTKAFARWVL) are cytoplasmic. The chain crosses the membrane as a helical span at residues 141–161 (AGIWVVSFLLAIPVLVYRTVT). Residues 162-179 (PKNKTLICDSRYPSDGHK) lie on the Extracellular side of the membrane. Asn-164 is a glycosylation site (N-linked (GlcNAc...) asparagine). Residues 180-200 (VFHLLFEAITGFLLPFLAVVA) form a helical membrane-spanning segment. The Cytoplasmic portion of the chain corresponds to 201–222 (SYSDIGRRLQARRFRRSRRTGR). A helical transmembrane segment spans residues 223 to 243 (LVVLIILAFAAFWLPYHLVNL). Residues 244–268 (VEAGRTLAGWDKNSPAGQRLKLARY) lie on the Extracellular side of the membrane. The chain crosses the membrane as a helical span at residues 269–289 (VLIALAFLSSSVNPVLYACAG). Topologically, residues 290-351 (GGLLRSAGVG…TSSTPPESSK (62 aa)) are cytoplasmic. Polar residues-rich tracts occupy residues 311-327 (EVSS…TPKA) and 339-351 (SFMT…ESSK). The interval 311-351 (EVSSTRRGGTLVQTPKATPTCPEPGPTDSFMTSSTPPESSK) is disordered.

This sequence belongs to the G-protein coupled receptor 1 family. Phosphorylated by GRK6 upon leukotriene B4 binding; which promotes desensitization. Exclusively expressed in polymorphonuclear leukocytes.

The protein resides in the cell membrane. In terms of biological role, receptor for leukotriene B4, a potent chemoattractant involved in inflammation and immune response. The polypeptide is Leukotriene B4 receptor 1 (Ltb4r) (Rattus norvegicus (Rat)).